A 194-amino-acid chain; its full sequence is Peptidyl-tRNA hydrolase (194 aa).

Y17 is a tRNA binding site. Catalysis depends on H22, which acts as the Proton acceptor. Positions 68, 70, and 116 each coordinate tRNA.

This sequence belongs to the PTH family. As to quaternary structure, monomer.

Its subcellular location is the cytoplasm. It carries out the reaction an N-acyl-L-alpha-aminoacyl-tRNA + H2O = an N-acyl-L-amino acid + a tRNA + H(+). Its function is as follows. Hydrolyzes ribosome-free peptidyl-tRNAs (with 1 or more amino acids incorporated), which drop off the ribosome during protein synthesis, or as a result of ribosome stalling. In terms of biological role, catalyzes the release of premature peptidyl moieties from peptidyl-tRNA molecules trapped in stalled 50S ribosomal subunits, and thus maintains levels of free tRNAs and 50S ribosomes. This is Peptidyl-tRNA hydrolase from Azotobacter vinelandii (strain DJ / ATCC BAA-1303).